We begin with the raw amino-acid sequence, 423 residues long: Carboxypeptidase S1 (423 aa).

4 disulfide bridges follow: Cys8–Cys68, Cys55–Cys300, Cys223–Cys246, and Cys230–Cys239. Ser143 is a catalytic residue. N-linked (GlcNAc...) asparagine glycosylation is present at Asn200. Asp340 is a catalytic residue. Cys343 is a substrate binding site. His397 is an active-site residue. Glu398 is a substrate binding site.

The protein belongs to the peptidase S10 family.

It carries out the reaction Preferential release of a C-terminal arginine or lysine residue.. This Penicillium janthinellum (Penicillium vitale) protein is Carboxypeptidase S1.